A 248-amino-acid chain; its full sequence is Sperm-specific protein Don juan (248 aa).

The stretch at 82–147 (KEGNQDELEN…EKKTKCAKKD (66 aa)) forms a coiled coil. Residues 146 to 200 (KDPCKKKDPCKKKDPCKKKDPCKKKDPCKKKDPCKKKDPCKKKDPCKKKGGDLKK) form a disordered region. Repeat copies occupy residues 147–152 (DPCKKK), 153–158 (DPCKKK), 159–164 (DPCKKK), 165–170 (DPCKKK), 171–176 (DPCKKK), 177–182 (DPCKKK), 183–188 (DPCKKK), and 189–194 (DPCKKK). The segment at 147 to 194 (DPCKKKDPCKKKDPCKKKDPCKKKDPCKKKDPCKKKDPCKKKDPCKKK) is 8 X 6 AA tandem repeat of D-P-C-K-K-K. Residues 197–244 (DLKKKCKKLAEKEKCKKLAKKEKMKKLQKKCKKMAQKEKCKKMAKKDK) adopt a coiled-coil conformation.

As to expression, expression limited to post-meiotic male germ cells. Expressed in elongated spermatids during individualization and in finally elongated nuclei of spermatids. After completion of nuclear shaping it is no longer expressed in the sperm heads with the onset of individualization.

Its subcellular location is the nucleus. It is found in the mitochondrion. Functionally, may be involved in the final steps of mitochondrial differentiation within the flagellum. The chain is Sperm-specific protein Don juan (dj) from Drosophila melanogaster (Fruit fly).